We begin with the raw amino-acid sequence, 37 residues long: Cytochrome b6-f complex subunit 5 (37 aa).

A helical membrane pass occupies residues 5–25; that stretch reads LLSGIVLGLIVVTLSGLFYAA.

Belongs to the PetG family. The 4 large subunits of the cytochrome b6-f complex are cytochrome b6, subunit IV (17 kDa polypeptide, PetD), cytochrome f and the Rieske protein, while the 4 small subunits are PetG, PetL, PetM and PetN. The complex functions as a dimer.

It localises to the cellular thylakoid membrane. In terms of biological role, component of the cytochrome b6-f complex, which mediates electron transfer between photosystem II (PSII) and photosystem I (PSI), cyclic electron flow around PSI, and state transitions. PetG is required for either the stability or assembly of the cytochrome b6-f complex. The chain is Cytochrome b6-f complex subunit 5 from Trichormus variabilis (strain ATCC 29413 / PCC 7937) (Anabaena variabilis).